A 210-amino-acid chain; its full sequence is Adenylate kinase (210 aa).

10-15 (GSGKGT) lines the ATP pocket. The interval 28–57 (SVGKVLRTVMESNTAEADVVKKFIKSGKLV) is NMP. AMP is bound by residues R34, 55–57 (KLV), 83–86 (GYPR), and Q90. Positions 120–158 (GRISCTDCGTIYNKLYCMPKINGVCDICNSSSFQNRVDD) are LID. R121 contacts ATP. Zn(2+) contacts are provided by C124 and C127. ATP is bound at residue 130–131 (IY). Zn(2+) is bound by residues C144 and C147. AMP contacts are provided by R155 and R166. Q194 serves as a coordination point for ATP.

This sequence belongs to the adenylate kinase family. In terms of assembly, monomer.

Its subcellular location is the cytoplasm. The enzyme catalyses AMP + ATP = 2 ADP. Its pathway is purine metabolism; AMP biosynthesis via salvage pathway; AMP from ADP: step 1/1. In terms of biological role, catalyzes the reversible transfer of the terminal phosphate group between ATP and AMP. Plays an important role in cellular energy homeostasis and in adenine nucleotide metabolism. The chain is Adenylate kinase from Orientia tsutsugamushi (strain Boryong) (Rickettsia tsutsugamushi).